The primary structure comprises 473 residues: UDP-N-acetylmuramate--L-alanine ligase (473 aa).

Residue 123-129 participates in ATP binding; sequence GTHGKTT.

Belongs to the MurCDEF family.

The protein resides in the cytoplasm. The catalysed reaction is UDP-N-acetyl-alpha-D-muramate + L-alanine + ATP = UDP-N-acetyl-alpha-D-muramoyl-L-alanine + ADP + phosphate + H(+). It participates in cell wall biogenesis; peptidoglycan biosynthesis. In terms of biological role, cell wall formation. The sequence is that of UDP-N-acetylmuramate--L-alanine ligase from Marinomonas sp. (strain MWYL1).